The chain runs to 504 residues: Signal recognition particle receptor FtsY (504 aa).

Disordered stretches follow at residues 1–71 (MFNW…DDYL) and 116–135 (ESDQATATEADLPSPETEIT). Residues 308-315 (GVNGAGKT), 391-395 (DTAGR), and 455-458 (TKLD) each bind GTP.

This sequence belongs to the GTP-binding SRP family. FtsY subfamily. Part of the signal recognition particle protein translocation system, which is composed of SRP and FtsY.

Its subcellular location is the cell inner membrane. The protein localises to the cytoplasm. It catalyses the reaction GTP + H2O = GDP + phosphate + H(+). Functionally, involved in targeting and insertion of nascent membrane proteins into the cytoplasmic membrane. Acts as a receptor for the complex formed by the signal recognition particle (SRP) and the ribosome-nascent chain (RNC). This is Signal recognition particle receptor FtsY from Synechocystis sp. (strain ATCC 27184 / PCC 6803 / Kazusa).